Consider the following 122-residue polypeptide: NADPH-dependent 7-cyano-7-deazaguanine reductase (122 aa).

The Thioimide intermediate role is filled by Cys-34. Asp-41 acts as the Proton donor in catalysis. Substrate contacts are provided by residues Val-56–Leu-58 and His-75–Glu-76.

The protein belongs to the GTP cyclohydrolase I family. QueF type 1 subfamily.

The protein localises to the cytoplasm. The enzyme catalyses 7-aminomethyl-7-carbaguanine + 2 NADP(+) = 7-cyano-7-deazaguanine + 2 NADPH + 3 H(+). Its pathway is tRNA modification; tRNA-queuosine biosynthesis. In terms of biological role, catalyzes the NADPH-dependent reduction of 7-cyano-7-deazaguanine (preQ0) to 7-aminomethyl-7-deazaguanine (preQ1). The protein is NADPH-dependent 7-cyano-7-deazaguanine reductase of Anaeromyxobacter sp. (strain Fw109-5).